We begin with the raw amino-acid sequence, 408 residues long: Dual-specificity RNA methyltransferase RlmN (408 aa).

Glutamate 122 (proton acceptor) is an active-site residue. Residues 128-369 (EEDRGTLCIS…NRAGYASPIR (242 aa)) enclose the Radical SAM core domain. A disulfide bridge connects residues cysteine 135 and cysteine 380. [4Fe-4S] cluster is bound by residues cysteine 142, cysteine 146, and cysteine 149. S-adenosyl-L-methionine-binding positions include 206 to 207 (GE), serine 238, 260 to 262 (SLH), and asparagine 337. The active-site S-methylcysteine intermediate is the cysteine 380.

Belongs to the radical SAM superfamily. RlmN family. It depends on [4Fe-4S] cluster as a cofactor.

It is found in the cytoplasm. The catalysed reaction is adenosine(2503) in 23S rRNA + 2 reduced [2Fe-2S]-[ferredoxin] + 2 S-adenosyl-L-methionine = 2-methyladenosine(2503) in 23S rRNA + 5'-deoxyadenosine + L-methionine + 2 oxidized [2Fe-2S]-[ferredoxin] + S-adenosyl-L-homocysteine. It catalyses the reaction adenosine(37) in tRNA + 2 reduced [2Fe-2S]-[ferredoxin] + 2 S-adenosyl-L-methionine = 2-methyladenosine(37) in tRNA + 5'-deoxyadenosine + L-methionine + 2 oxidized [2Fe-2S]-[ferredoxin] + S-adenosyl-L-homocysteine. Functionally, specifically methylates position 2 of adenine 2503 in 23S rRNA and position 2 of adenine 37 in tRNAs. m2A2503 modification seems to play a crucial role in the proofreading step occurring at the peptidyl transferase center and thus would serve to optimize ribosomal fidelity. The protein is Dual-specificity RNA methyltransferase RlmN of Chelativorans sp. (strain BNC1).